Reading from the N-terminus, the 175-residue chain is ATP-dependent protease subunit HslV (175 aa).

Thr-2 is an active-site residue. Na(+) is bound by residues Ala-156, Cys-159, and Thr-162.

The protein belongs to the peptidase T1B family. HslV subfamily. In terms of assembly, a double ring-shaped homohexamer of HslV is capped on each side by a ring-shaped HslU homohexamer. The assembly of the HslU/HslV complex is dependent on binding of ATP.

It localises to the cytoplasm. The enzyme catalyses ATP-dependent cleavage of peptide bonds with broad specificity.. Its activity is regulated as follows. Allosterically activated by HslU binding. Protease subunit of a proteasome-like degradation complex believed to be a general protein degrading machinery. The protein is ATP-dependent protease subunit HslV of Rhizobium rhizogenes (strain K84 / ATCC BAA-868) (Agrobacterium radiobacter).